Consider the following 680-residue polypeptide: Methionine--tRNA ligase (680 aa).

A 'HIGH' region motif is present at residues 15–25; the sequence is PYANGPVHIGH. Zn(2+) is bound by residues Cys-147, Cys-150, Cys-160, and Cys-163. The 'KMSKS' region motif lies at 332 to 336; it reads KISTS. Thr-335 is a binding site for ATP. The 102-residue stretch at 579-680 folds into the tRNA-binding domain; the sequence is DFLKLDIRVG…AEVAAGSQVK (102 aa).

It belongs to the class-I aminoacyl-tRNA synthetase family. MetG type 1 subfamily. In terms of assembly, homodimer. Requires Zn(2+) as cofactor.

The protein resides in the cytoplasm. The enzyme catalyses tRNA(Met) + L-methionine + ATP = L-methionyl-tRNA(Met) + AMP + diphosphate. Its function is as follows. Is required not only for elongation of protein synthesis but also for the initiation of all mRNA translation through initiator tRNA(fMet) aminoacylation. This is Methionine--tRNA ligase from Porphyromonas gingivalis (strain ATCC BAA-308 / W83).